The sequence spans 274 residues: Chromatin modification-related protein YNG2 (274 aa).

A disordered region spans residues 121–194 (EDEMESGPDF…ASTEREGTLD (74 aa)). The segment covering 166 to 180 (THREKSYNKGDDTAD) has biased composition (basic and acidic residues). A PHD-type zinc finger spans residues 215 to 264 (NLYCFCQRVSFGEMVACDGPNCKYEWFHYECVNLTEPPKGTWYCPDCKQE). 8 residues coordinate Zn(2+): cysteine 218, cysteine 220, cysteine 231, cysteine 236, histidine 242, cysteine 245, cysteine 258, and cysteine 261.

The protein belongs to the ING family. Interacts with H3K4me3 and to a lesser extent with H3K4me2. Component of the NuA4 histone acetyltransferase complex.

The protein localises to the nucleus. Component of the NuA4 histone acetyltransferase complex which is involved in transcriptional activation of selected genes principally by acetylation of nucleosomal histone H4 and H2A. The NuA4 complex is also involved in DNA repair. Involved in cell cycle progression and meiosis. This is Chromatin modification-related protein YNG2 (YNG2) from Candida glabrata (strain ATCC 2001 / BCRC 20586 / JCM 3761 / NBRC 0622 / NRRL Y-65 / CBS 138) (Yeast).